The sequence spans 247 residues: 23S rRNA (guanosine-2'-O-)-methyltransferase RlmB (247 aa).

Residues glycine 197, isoleucine 217, and leucine 226 each coordinate S-adenosyl-L-methionine.

This sequence belongs to the class IV-like SAM-binding methyltransferase superfamily. RNA methyltransferase TrmH family. RlmB subfamily.

The protein localises to the cytoplasm. It carries out the reaction guanosine(2251) in 23S rRNA + S-adenosyl-L-methionine = 2'-O-methylguanosine(2251) in 23S rRNA + S-adenosyl-L-homocysteine + H(+). Functionally, specifically methylates the ribose of guanosine 2251 in 23S rRNA. In Vibrio vulnificus (strain CMCP6), this protein is 23S rRNA (guanosine-2'-O-)-methyltransferase RlmB.